Reading from the N-terminus, the 260-residue chain is Acetylglutamate kinase (260 aa).

Substrate is bound by residues 46–47 (GG), Arg68, and Asn160.

The protein belongs to the acetylglutamate kinase family. ArgB subfamily.

The protein localises to the cytoplasm. The enzyme catalyses N-acetyl-L-glutamate + ATP = N-acetyl-L-glutamyl 5-phosphate + ADP. It participates in amino-acid biosynthesis; L-arginine biosynthesis; N(2)-acetyl-L-ornithine from L-glutamate: step 2/4. Its function is as follows. Catalyzes the ATP-dependent phosphorylation of N-acetyl-L-glutamate. This is Acetylglutamate kinase from Shewanella sp. (strain ANA-3).